We begin with the raw amino-acid sequence, 135 residues long: Small ribosomal subunit protein eS6 (135 aa).

The protein belongs to the eukaryotic ribosomal protein eS6 family.

In Methanococcoides burtonii (strain DSM 6242 / NBRC 107633 / OCM 468 / ACE-M), this protein is Small ribosomal subunit protein eS6.